Here is a 155-residue protein sequence, read N- to C-terminus: Peptide deformylase 2 (155 aa).

Residues cysteine 90 and histidine 132 each coordinate Fe cation. Residue glutamate 133 is part of the active site. A Fe cation-binding site is contributed by histidine 136.

Belongs to the polypeptide deformylase family. Fe(2+) serves as cofactor.

It carries out the reaction N-terminal N-formyl-L-methionyl-[peptide] + H2O = N-terminal L-methionyl-[peptide] + formate. Its function is as follows. Removes the formyl group from the N-terminal Met of newly synthesized proteins. Requires at least a dipeptide for an efficient rate of reaction. N-terminal L-methionine is a prerequisite for activity but the enzyme has broad specificity at other positions. The chain is Peptide deformylase 2 from Clostridium perfringens (strain 13 / Type A).